The sequence spans 441 residues: Aminopeptidase C (441 aa).

Residues Cys-70, His-361, and Asn-382 contribute to the active site.

This sequence belongs to the peptidase C1 family.

It carries out the reaction Inactivates bleomycin B2 (a cytotoxic glycometallopeptide) by hydrolysis of a carboxyamide bond of beta-aminoalanine, but also shows general aminopeptidase activity. The specificity varies somewhat with source, but amino acid arylamides of Met, Leu and Ala are preferred.. The polypeptide is Aminopeptidase C (pepC) (Listeria monocytogenes serovar 1/2a (strain ATCC BAA-679 / EGD-e)).